Reading from the N-terminus, the 816-residue chain is Fibroblast growth factor receptor 1 (816 aa).

Positions 1–23 (MLSWRHLVFWAMLVMATLSAARP) are cleaved as a signal peptide. At 24-374 (APTLPEQVSP…VIMTSPLYLE (351 aa)) the chain is on the extracellular side. Positions 25–118 (PTLPEQVSPK…ETTFFAVNVS (94 aa)) constitute an Ig-like C2-type 1 domain. Cys54 and Cys100 are oxidised to a cystine. N-linked (GlcNAc...) asparagine glycans are attached at residues Asn76 and Asn116. The tract at residues 118–152 (SDRIPSVEDDDDDDEKSSSEEKEAENSKPNPVAPF) is disordered. The segment covering 133–143 (KSSSEEKEAEN) has biased composition (basic and acidic residues). Ig-like C2-type domains lie at 156–244 (PEKM…YQLD) and 253–355 (PILQ…AWLT). Residues Cys176 and Cys228 are joined by a disulfide bond. Residues Asn238, Asn262, Asn294, Asn315, and Asn328 are each glycosylated (N-linked (GlcNAc...) asparagine). Residues Cys275 and Cys339 are joined by a disulfide bond. A helical transmembrane segment spans residues 375–395 (IIIYCTGAFLISCMLVTVIIY). The Cytoplasmic portion of the chain corresponds to 396-816 (KMKNTTKKTD…QHANGGLKKR (421 aa)). Tyr459 carries the phosphotyrosine; by autocatalysis modification. The Protein kinase domain maps to 474–763 (LILGKPLGEG…VAMTSNQEYL (290 aa)). ATP is bound by residues 480 to 486 (LGEGCFG), Lys510, 558 to 560 (EYA), and Asn564. 2 positions are modified to phosphotyrosine; by autocatalysis: Tyr579 and Tyr581. Asp619 functions as the Proton acceptor in the catalytic mechanism. The ATP site is built by Arg623 and Asp637. Residues Tyr649, Tyr650, Tyr726, and Tyr762 each carry the phosphotyrosine; by autocatalysis modification. The interval 776–816 (FPDTRSSTCSSGEDSVFSHDPLPDEPCLPKYQHANGGLKKR) is disordered. Residues 779–788 (TRSSTCSSGE) show a composition bias toward polar residues.

Belongs to the protein kinase superfamily. Tyr protein kinase family. Fibroblast growth factor receptor subfamily. Monomer. Homodimer after ligand binding. Post-translationally, autophosphorylated. Binding of FGF family members together with heparan sulfate proteoglycan or heparin promotes receptor dimerization and autophosphorylation on tyrosine residues. Autophosphorylation occurs in trans between the two FGFR molecules present in the dimer and proceeds in a highly ordered manner. Phosphotyrosine residues provide docking sites for interacting proteins and so are crucial for FGFR1 function and its regulation. In terms of processing, ubiquitinated. FGFR1 is rapidly ubiquitinated after autophosphorylation, leading to internalization and degradation. N-glycosylated in the endoplasmic reticulum. The N-glycan chains undergo further maturation to an Endo H-resistant form in the Golgi apparatus.

Its subcellular location is the cell membrane. The protein resides in the nucleus. It is found in the cytoplasm. It localises to the cytosol. The protein localises to the cytoplasmic vesicle. It catalyses the reaction L-tyrosyl-[protein] + ATP = O-phospho-L-tyrosyl-[protein] + ADP + H(+). Its activity is regulated as follows. Present in an inactive conformation in the absence of bound ligand. Ligand binding leads to dimerization and activation by sequential autophosphorylation on tyrosine residues. Its function is as follows. Tyrosine-protein kinase that acts as a cell-surface receptor for fibroblast growth factors and plays an essential role in the regulation of embryonic development, cell proliferation, differentiation and migration. Required for normal mesoderm patterning and normal skeletogenesis. Phosphorylates PLCG1, FRS2, GAB1 and SHB. Ligand binding leads to the activation of several signaling cascades. Activation of PLCG1 leads to the production of the cellular signaling molecules diacylglycerol and inositol-1,4,5-trisphosphate. Phosphorylation of FRS2 triggers recruitment of GRB2, GAB1, PIK3R1 and SOS1, and mediates activation of RAS, MAPK1/ERK2, MAPK3/ERK1 and the MAP kinase signaling pathway, as well as of the AKT1 signaling pathway. Promotes phosphorylation of SHC1, STAT1 and PTPN11/SHP2. In the nucleus, enhances RPS6KA1 and CREB1 activity and contributes to the regulation of transcription. FGFR1 signaling is down-regulated by ubiquitination, internalization and degradation. The protein is Fibroblast growth factor receptor 1 (FGFR1) of Pleurodeles waltl (Iberian ribbed newt).